Reading from the N-terminus, the 129-residue chain is Glycine cleavage system H protein (129 aa).

Residues 24–106 (TYTVGITEHA…YAGGWIFKIK (83 aa)) form the Lipoyl-binding domain. An N6-lipoyllysine modification is found at Lys65.

It belongs to the GcvH family. As to quaternary structure, the glycine cleavage system is composed of four proteins: P, T, L and H. (R)-lipoate is required as a cofactor.

Its function is as follows. The glycine cleavage system catalyzes the degradation of glycine. The H protein shuttles the methylamine group of glycine from the P protein to the T protein. This is Glycine cleavage system H protein from Escherichia coli O45:K1 (strain S88 / ExPEC).